We begin with the raw amino-acid sequence, 955 residues long: Disintegrin and metalloproteinase domain-containing protein 19 (955 aa).

The N-terminal stretch at 1–25 (MPGGAGAARLCLLAFALQPLRPRAA) is a signal peptide. Residues 26-202 (REPGWTRGSE…QTKKRPRRMK (177 aa)) constitute a propeptide that is removed on maturation. The Cysteine switch motif lies at 130-137 (STCRGIRG). Cys-132 contributes to the Zn(2+) binding site. Asn-144 carries an N-linked (GlcNAc...) asparagine glycan. Topologically, residues 203–699 (REDLNSMKYV…IDSGPMPPES (497 aa)) are extracellular. One can recognise a Peptidase M12B domain in the interval 210–408 (KYVELYLVAD…GGGMCLSNMP (199 aa)). 3 disulfide bridges follow: Cys-320-Cys-403, Cys-360-Cys-387, and Cys-361-Cys-370. A Zn(2+)-binding site is contributed by His-345. The active site involves Glu-346. Zn(2+) contacts are provided by His-349 and His-355. In terms of domain architecture, Disintegrin spans 416-502 (GRRCGNGYLE…HCPTNFYQMD (87 aa)). Residues Asn-444 and Asn-447 are each glycosylated (N-linked (GlcNAc...) asparagine). An intrachain disulfide couples Cys-474 to Cys-494. Residue Asn-645 is glycosylated (N-linked (GlcNAc...) asparagine). The EGF-like domain occupies 650–682 (ETEGCGKKCNGHGVCNNNQNCHCLPGWAPPFCN). Disulfide bonds link Cys-654–Cys-664, Cys-658–Cys-670, and Cys-672–Cys-681. The helical transmembrane segment at 700–720 (VGPVVAGVLVAILVLAVLMLM) threads the bilayer. Residues 721–955 (YYCCRQNNKL…AKHSCFLVPA (235 aa)) are Cytoplasmic-facing. Positions 753–771 (SQNSGTGHANPTFKLQTPQ) are enriched in polar residues. The interval 753 to 917 (SQNSGTGHAN…LKVKAGTRGL (165 aa)) is disordered. 2 stretches are compositionally biased toward pro residues: residues 787-796 (SQPPPRPPPD) and 833-844 (RPPPSRPIPPAP). The SH3-binding signature appears at 833 to 844 (RPPPSRPIPPAP).

Interacts with SH3PXD2A. Requires Zn(2+) as cofactor. Post-translationally, the precursor is cleaved by a furin endopeptidase. In terms of tissue distribution, expressed in many normal organ tissues and several cancer cell lines.

It localises to the membrane. Its function is as follows. Participates in the proteolytic processing of beta-type neuregulin isoforms which are involved in neurogenesis and synaptogenesis, suggesting a regulatory role in glial cell. Also cleaves alpha-2 macroglobulin. May be involved in osteoblast differentiation and/or osteoblast activity in bone. The polypeptide is Disintegrin and metalloproteinase domain-containing protein 19 (ADAM19) (Homo sapiens (Human)).